Reading from the N-terminus, the 315-residue chain is Aspartate carbamoyltransferase catalytic subunit (315 aa).

Carbamoyl phosphate-binding residues include Arg65 and Thr66. Position 93 (Lys93) interacts with L-aspartate. Arg115, His145, and Gln148 together coordinate carbamoyl phosphate. Residues Arg179 and Arg234 each coordinate L-aspartate. Gly275 and Pro276 together coordinate carbamoyl phosphate.

The protein belongs to the aspartate/ornithine carbamoyltransferase superfamily. ATCase family. Heterododecamer (2C3:3R2) of six catalytic PyrB chains organized as two trimers (C3), and six regulatory PyrI chains organized as three dimers (R2).

The enzyme catalyses carbamoyl phosphate + L-aspartate = N-carbamoyl-L-aspartate + phosphate + H(+). It participates in pyrimidine metabolism; UMP biosynthesis via de novo pathway; (S)-dihydroorotate from bicarbonate: step 2/3. In terms of biological role, catalyzes the condensation of carbamoyl phosphate and aspartate to form carbamoyl aspartate and inorganic phosphate, the committed step in the de novo pyrimidine nucleotide biosynthesis pathway. The polypeptide is Aspartate carbamoyltransferase catalytic subunit (Xanthomonas oryzae pv. oryzae (strain MAFF 311018)).